The primary structure comprises 1096 residues: MSRSAIQVAKTATHLPDLVEVQRASFKWFLEKGLIEELENFSPITDYTGKLELHFIGSEYRLKRPRHDVEEAKKRDATFASQMYVTCRLINKETGEIKEQEVFIGELPLMTERGTFIINGAERVIVNQIVRSPGVYFKDEQDKNGRRTYNASVIPNRGAWLKFETDKNDLLHVRVDKTRKINAHVLMRAMGLSDNDVIDKLRHPEYYKKSIEAADEEGISSEDQALLELYKKLRPGEPPSVSGGQQLLQSRFFDPKRYDLGRVGRYKINKKLRLTIPDSVRTLTHEDVLSTIDYLINLELDVGGATLDDIDHLGNRRVRSVGELLQNQVRVGLNRLERIIKERMTVGETDSLTPAQLVNPKPLVAAVKEFFGSSQLSQFMDQTNPLAELTHKRRISALGPGGLTRERAGFAVRDIHPSHYGRLCPIETPEGPNAGLINSLATHARVNDYGFIETPFWKVDKGRVIKEGKPIYLSADLEDECRVAPGDVATDKEGMIVADLIPVRYRQDFEKVPPEQVDYVQLSPVQVISVATSLIPFLEHDDANRALMGSNMQRQAVPLLRPERPLVGTGLETQVARDSGMVPISQVNGTVTYVDANIIVVTDEEGSEHHHSLQKYQRSNQDTCLNQRPIVHNGDPVIIGQVLADGSACEGGEIALGQNVLIAYMPWEGYNYEDAILVSERLVKDDLYTSVHIEKYEIEARQTKLGPEEITREIPNIAEESLGNLDEMGIIRIGAFVESGDILVGKVTPKGESDQPPEEKLLRAIFGEKARDVRDNSLRVPSTERGRVVDVRIYTREQGDELPPGANMVVRVYVAQRRKIQVGDKMAGRHGNKGIISRILPREDMPYLPDGTPVDIVLNPLGVPSRMNVGQVFELLMGWAASNLDCRVKVVPFDEMYGAEKSYQTVTAYLKEAASLPGKEWVYNPEDPGKLLLRDGRTGEPFDQPVAVGYSHFLKLVHLVDDKIHARSTGPYSLVTQQPLGGKAQQGGQRLGEMEVWALEAYGAAYTLQELLTVKSDDMQGRNEALNAIVKGKPIPRPGTPESFKVLMRELQSLGLDIGVYTDEGKEVDLMQDVNPRRSTPSRPTYESLGSDYQED.

Residues 1070–1096 (LMQDVNPRRSTPSRPTYESLGSDYQED) form a disordered region.

It belongs to the RNA polymerase beta chain family. In cyanobacteria the RNAP catalytic core is composed of 2 alpha, 1 beta, 1 beta', 1 gamma and 1 omega subunit. When a sigma factor is associated with the core the holoenzyme is formed, which can initiate transcription.

The enzyme catalyses RNA(n) + a ribonucleoside 5'-triphosphate = RNA(n+1) + diphosphate. Functionally, DNA-dependent RNA polymerase catalyzes the transcription of DNA into RNA using the four ribonucleoside triphosphates as substrates. This is DNA-directed RNA polymerase subunit beta from Prochlorococcus marinus (strain MIT 9211).